Reading from the N-terminus, the 510-residue chain is Aromatic-L-amino-acid decarboxylase (510 aa).

Residues 1-17 (MSHIPISNTIPTKQTDG) are compositionally biased toward polar residues. A disordered region spans residues 1–28 (MSHIPISNTIPTKQTDGNGKANISPDKL). Substrate is bound at residue threonine 117. Pyridoxal 5'-phosphate-binding residues include alanine 183, serine 184, histidine 227, aspartate 305, and asparagine 334. A substrate-binding site is contributed by histidine 227. Histidine 227 is an active-site residue. Lysine 337 carries the N6-(pyridoxal phosphate)lysine modification. The segment at 358–384 (NAFNVDPLYLKHDMQGSAPDYRHWQIP) is disordered.

The protein belongs to the group II decarboxylase family. In terms of assembly, homodimer. Requires pyridoxal 5'-phosphate as cofactor. In terms of tissue distribution, hypoderm isoform is expressed only in hypodermal epithelium and the CNS isoform only in central nervous system. Expressed in the adult head (at protein level).

The catalysed reaction is L-dopa + H(+) = dopamine + CO2. It carries out the reaction 5-hydroxy-L-tryptophan + H(+) = serotonin + CO2. Its function is as follows. Catalyzes the decarboxylation of L-3,4-dihydroxyphenylalanine (L-DOPA) to dopamine and L-5-hydroxytryptophan (5-HTP) to serotonin. Catalyzes the formation of serotonin more efficiently than dopamine. Displays no activity to tyrosine. Variation in the synthesis of bioamines may be a factor contributing to natural variation in life span. The protein is Aromatic-L-amino-acid decarboxylase (Ddc) of Drosophila melanogaster (Fruit fly).